The sequence spans 176 residues: NADH-dependent flavin reductase (176 aa).

FAD contacts are provided by residues 39–46 (EDSVHGMT) and 48–49 (NA). Ser-52 serves as a coordination point for NAD(+). FAD contacts are provided by residues 63–65 (SIS), 69–70 (KM), and 95–96 (HF). NAD(+) contacts are provided by residues His-137 and 157-160 (FYTG).

Belongs to the non-flavoprotein flavin reductase family. As to quaternary structure, homodimer. 4-nitrophenol 2-monooxygenase complex consists of an oxygenase component NphA1 and a flavin reductase component NphA2.

The enzyme catalyses a reduced flavin + NAD(+) = an oxidized flavin + NADH + 2 H(+). Catalyzes the reduction of FAD with the concomitant oxidation of NADH. NAD is the physiological electron donor. Subsequently, the reduced flavins diffuse to the oxygenase component NphA2. This is NADH-dependent flavin reductase (nphA2) from Rhodococcus sp.